Consider the following 445-residue polypeptide: C-terminal-binding protein 2 (445 aa).

The residue at position 22 (Arg-22) is an Asymmetric dimethylarginine. NAD(+) is bound by residues Ser-106, 186–191 (IGFGRT), Asp-210, 243–249 (CNLNEHN), 270–272 (AAR), and Asp-296. Residue Arg-272 is part of the active site. Glu-301 is an active-site residue. The Proton donor role is filled by His-321. Position 321–324 (321–324 (HTAW)) interacts with NAD(+). The segment at 414–445 (THNLPTVAHPSQAPSPNQPTKHGDNREHPNEQ) is disordered. Phosphoserine; by HIPK2 is present on Ser-428. Residues 434 to 445 (KHGDNREHPNEQ) are compositionally biased toward basic and acidic residues.

This sequence belongs to the D-isomer specific 2-hydroxyacid dehydrogenase family. As to quaternary structure, interacts with HIPK2, ZNF217 and PNN. Interacts with the transcription factors BKLF, delta EF1/AREB6/ZEB, EVI-1 and Friend of GATA (FOG) via the consensus motif P-X-[DNS]-L-[STVA]. Can form a complex with BKLF on a CACCC-box oligonucleotide. Can form homodimers or heterodimers of CTBP1 and CTBP2. Interacts with NRIP1 and WIZ. Interacts with PRDM16; represses white adipose tissue (WAT)-specific genes expression. Interacts with MCRIP1. Phosphorylation by HIPK2 on Ser-428 induces proteasomal degradation. Isoform 2 is specifically localized in synaptic ribbon (at protein level).

Its subcellular location is the nucleus. It is found in the synapse. In terms of biological role, corepressor targeting diverse transcription regulators. Functions in brown adipose tissue (BAT) differentiation. Isoform 2 probably acts as a scaffold for specialized synapses. The chain is C-terminal-binding protein 2 (Ctbp2) from Rattus norvegicus (Rat).